A 242-amino-acid chain; its full sequence is Carboxy-S-adenosyl-L-methionine synthase (242 aa).

Residues Tyr39, 64–66 (GCS), 89–90 (DN), 117–118 (DI), Asn132, and Arg199 each bind S-adenosyl-L-methionine.

The protein belongs to the class I-like SAM-binding methyltransferase superfamily. Cx-SAM synthase family. As to quaternary structure, homodimer.

The enzyme catalyses prephenate + S-adenosyl-L-methionine = carboxy-S-adenosyl-L-methionine + 3-phenylpyruvate + H2O. Catalyzes the conversion of S-adenosyl-L-methionine (SAM) to carboxy-S-adenosyl-L-methionine (Cx-SAM). The polypeptide is Carboxy-S-adenosyl-L-methionine synthase (Aliivibrio fischeri (strain ATCC 700601 / ES114) (Vibrio fischeri)).